A 338-amino-acid chain; its full sequence is Phenylalanine--tRNA ligase alpha subunit (338 aa).

Residue E253 coordinates Mg(2+).

Belongs to the class-II aminoacyl-tRNA synthetase family. Phe-tRNA synthetase alpha subunit type 1 subfamily. Tetramer of two alpha and two beta subunits. The cofactor is Mg(2+).

The protein resides in the cytoplasm. It catalyses the reaction tRNA(Phe) + L-phenylalanine + ATP = L-phenylalanyl-tRNA(Phe) + AMP + diphosphate + H(+). The polypeptide is Phenylalanine--tRNA ligase alpha subunit (Legionella pneumophila (strain Paris)).